The primary structure comprises 329 residues: Serpentine receptor class alpha-7 (329 aa).

7 helical membrane passes run 25 to 45 (YVYL…VKIV), 57 to 77 (ILLF…LFSA), 104 to 124 (YLKV…GLLL), 143 to 163 (VGIA…KIII), 187 to 207 (RLFA…SVLL), 237 to 257 (TICF…FGIF), and 273 to 293 (FIVV…ILLV).

The protein belongs to the nematode receptor-like protein sra family.

The protein resides in the membrane. This Caenorhabditis elegans protein is Serpentine receptor class alpha-7 (sra-7).